A 425-amino-acid chain; its full sequence is UDP-N-acetylglucosamine 1-carboxyvinyltransferase (425 aa).

Phosphoenolpyruvate is bound at residue 22-23 (KN). Arginine 98 provides a ligand contact to UDP-N-acetyl-alpha-D-glucosamine. The active-site Proton donor is cysteine 122. Cysteine 122 carries the post-translational modification 2-(S-cysteinyl)pyruvic acid O-phosphothioketal. Residues 127–131 (RPVDQ), aspartate 313, and isoleucine 335 each bind UDP-N-acetyl-alpha-D-glucosamine.

Belongs to the EPSP synthase family. MurA subfamily.

Its subcellular location is the cytoplasm. It carries out the reaction phosphoenolpyruvate + UDP-N-acetyl-alpha-D-glucosamine = UDP-N-acetyl-3-O-(1-carboxyvinyl)-alpha-D-glucosamine + phosphate. The protein operates within cell wall biogenesis; peptidoglycan biosynthesis. Its function is as follows. Cell wall formation. Adds enolpyruvyl to UDP-N-acetylglucosamine. The sequence is that of UDP-N-acetylglucosamine 1-carboxyvinyltransferase from Xylella fastidiosa (strain M23).